The following is a 66-amino-acid chain: Large ribosomal subunit protein bL33c (66 aa).

It belongs to the bacterial ribosomal protein bL33 family.

The protein resides in the plastid. It is found in the chloroplast. This chain is Large ribosomal subunit protein bL33c, found in Glycine max (Soybean).